Here is a 353-residue protein sequence, read N- to C-terminus: MSTKDIFFNPIWDVRMTDTSLRDGSHHKRHQFTKDEVGAIVAALDTAGVPVIEVTHGDGLGGSSFNYGFSKTPEQELIKLAAETAKEAKIAFLMLPGVGTKEDIKEAQNNGGSICRIATHCTEADVSIQHFGLARELGLETVGFLMMSHTIPPEKLAQQARIMADAGCQCVYVVDSAGALVLEGVRDRVAALVAELGSDAQVGFHGHENLGLGVANSVEAVRAGAKQIDGSCRRFGAGAGNAPVEALIGVFDKIGVKTGIDFFDIADAAEEVVAPAMPAECLLDRNALIMGYSGVYSSFLKHAIRQSERYGVPAHQLLHRAGQRKLIGGQEDQLIDIALEIKREQDSGATAAH.

A Pyruvate carboxyltransferase domain is found at 14–266 (VRMTDTSLRD…KTGIDFFDIA (253 aa)). 22 to 23 (RD) contributes to the substrate binding site. Residue Asp-23 coordinates Mn(2+). His-26 functions as the Proton acceptor in the catalytic mechanism. 2 residues coordinate substrate: Ser-176 and His-205. 2 residues coordinate Mn(2+): His-205 and His-207. A substrate-binding site is contributed by Tyr-296.

Belongs to the 4-hydroxy-2-oxovalerate aldolase family.

The catalysed reaction is (S)-4-hydroxy-2-oxopentanoate = acetaldehyde + pyruvate. In Mycobacterium sp. (strain JLS), this protein is 4-hydroxy-2-oxovalerate aldolase 2.